Here is a 180-residue protein sequence, read N- to C-terminus: tRNA (cytidine(56)-2'-O)-methyltransferase (180 aa).

S-adenosyl-L-methionine is bound by residues leucine 83, 115–119 (GAEKV), and 133–140 (VGNQPHSE).

The protein belongs to the aTrm56 family. Homodimer.

It localises to the cytoplasm. It catalyses the reaction cytidine(56) in tRNA + S-adenosyl-L-methionine = 2'-O-methylcytidine(56) in tRNA + S-adenosyl-L-homocysteine + H(+). In terms of biological role, specifically catalyzes the AdoMet-dependent 2'-O-ribose methylation of cytidine at position 56 in tRNAs. This chain is tRNA (cytidine(56)-2'-O)-methyltransferase, found in Methanococcus aeolicus (strain ATCC BAA-1280 / DSM 17508 / OCM 812 / Nankai-3).